The chain runs to 601 residues: DDB1- and CUL4-associated factor 8 (601 aa).

2 stretches are compositionally biased toward polar residues: residues 1 to 24 and 46 to 60; these read MSFS…SSPE and VSLS…TTQA. Residues 1-150 are disordered; it reads MSFSGEMSNG…DWLISEKTPL (150 aa). A Nuclear export signal motif is present at residues 39 to 50; the sequence is IEVEASDVSLSL. The span at 61–99 shows a compositional bias: basic and acidic residues; it reads ESRDSCSETSGEDKDSDSMDDTGHYSINDENRGNDQSHS. The stretch at 94-131 forms a coiled coil; that stretch reads NDQSHSEDEEEEEEEDEEEEAVRHRKRAQRKRANRDQE. Residues 100–113 show a composition bias toward acidic residues; it reads EDEEEEEEEDEEEE. Basic residues predominate over residues 116–126; it reads RHRKRAQRKRA. Residues 127–140 show a composition bias toward basic and acidic residues; the sequence is NRDQESSDEERALD. WD repeat units follow at residues 194–233, 237–278, 284–324, 332–372, 388–427, 435–475, and 479–519; these read GHSG…PVLE, GHKS…CCKN, QHKG…PASR, ESKV…ENVN, EAKA…GAEY, RNNA…IVQF, and DKGG…TELD. Positions 561–601 are disordered; sequence RRRRRDAGLGAGDAESDDSPSSSDSSDDDEDGPDRVQCIPS.

This sequence belongs to the WD repeat DCAF8 family.

The protein localises to the nucleus. Its subcellular location is the cytoplasm. In Xenopus laevis (African clawed frog), this protein is DDB1- and CUL4-associated factor 8 (dcaf8).